A 483-amino-acid chain; its full sequence is Replication factor C large subunit (483 aa).

Residue 44-51 (GSPGVGKT) coordinates ATP. The disordered stretch occupies residues 415–483 (AVDHGGGIFA…DGQAGLSDFM (69 aa)). The segment covering 430-443 (AQSDTESDDDDDGD) has biased composition (acidic residues). Positions 451–463 (DEPKEESVNREQS) are enriched in basic and acidic residues.

It belongs to the activator 1 small subunits family. RfcL subfamily. Heteromultimer composed of small subunits (RfcS) and large subunits (RfcL).

Its function is as follows. Part of the RFC clamp loader complex which loads the PCNA sliding clamp onto DNA. This is Replication factor C large subunit from Natronomonas pharaonis (strain ATCC 35678 / DSM 2160 / CIP 103997 / JCM 8858 / NBRC 14720 / NCIMB 2260 / Gabara) (Halobacterium pharaonis).